The following is a 1009-amino-acid chain: Epididymis-specific alpha-mannosidase (1009 aa).

The first 23 residues, 1-23 (MGQLCWLPLLAPLLLLRPPGVQS), serve as a signal peptide directing secretion. Residues His-36, Asp-38, and Asp-151 each contribute to the Zn(2+) site. Asp-151 serves as the catalytic Nucleophile. N-linked (GlcNAc...) asparagine glycosylation is found at Asn-226, Asn-249, Asn-294, and Asn-336. Zn(2+) is bound at residue His-420. N-linked (GlcNAc...) asparagine glycans are attached at residues Asn-516, Asn-608, Asn-670, Asn-675, Asn-748, Asn-808, Asn-812, and Asn-890. The tract at residues 972–991 (GPGRHRGDTTSPSRPPGGPI) is disordered.

It belongs to the glycosyl hydrolase 38 family. Requires Zn(2+) as cofactor.

The protein resides in the secreted. The catalysed reaction is Hydrolysis of terminal, non-reducing alpha-D-mannose residues in alpha-D-mannosides.. This chain is Epididymis-specific alpha-mannosidase (MAN2B2), found in Homo sapiens (Human).